Reading from the N-terminus, the 548-residue chain is Rhotekin (548 aa).

The 76-residue stretch at 10 to 85 (DLNMLYIRQM…LQRRKEAQVL (76 aa)) folds into the REM-1 domain. 2 positions are modified to phosphoserine: Ser22 and Ser93. The segment at 83–103 (QVLGKTGRRPSDSVQPPERSP) is disordered. Arg217 is subject to Asymmetric dimethylarginine. Ser219 carries the post-translational modification Phosphoserine. The PH domain occupies 296–403 (QPTASGTLRV…WMEALWQLFL (108 aa)). 3 positions are modified to phosphoserine: Ser504, Ser513, and Ser528. Residues 506–548 (DAVPADHSLGPSRSVAPLPPQRSPQSRGFYSKSQLSTWLQSPV) form a disordered region. Polar residues predominate over residues 528-548 (SPQSRGFYSKSQLSTWLQSPV).

As to quaternary structure, interacts via its C-terminal region with the TAX1BP3 PDZ domain. This interaction facilitates Rho-mediated activation of the c-Fos serum response element (SRE). Interacts with SEPT9. Specifically binds to GTP-bound RHOA, RHOB and RHOC and inhibits their GTPase activity.

Mediates Rho signaling to activate NF-kappa-B and may confer increased resistance to apoptosis to cells in gastric tumorigenesis. May play a novel role in the organization of septin structures. This Rattus norvegicus (Rat) protein is Rhotekin.